Consider the following 862-residue polypeptide: MLGSNTFKNMQRRHTTLREKGRRQAIRGPAYMFNEKGTSLTPEEERFLDSAEYGNIPVVRKMLEESKTLNFNCVDYMGQNALQLAVGNEHLEVTELLLKKENLARVGDALLLAISKGYVRIVEAILSHPAFAQGQRLTLSPLEQELRDDDFYAYDEDGTRFSHDITPIILAAHCQEYEIVHILLLKGARIERPHDYFCKCNECTEKQRKDSFSHSRSRMNAYKGLASAAYLSLSSEDPVLTALELSNELARLANIETEFKNDYRKLSMQCKDFVVGVLDLCRDTEEVEAILNGDVNLQVWSDHHRPSLSRIKLAIKYEVKKFVAHPNCQQQLLTMWYENLSGLRQQSIAVKFLAVFGVSIGLPFLAIAYWIAPCSKLGQTLRSPFMKFVAHAVSFTIFLGLLVVNASDRFEGVKTLPNETFTDYPKQIFRVKTTQFSWTEMLIMKWVLGMIWSECKEIWEEGPREYVLHLWNLLDFGMLSIFVASFTARFMAFLKASEAQLYVDQYVQDVTLHNVSLPPEVAYFTYARDKWWPSDPQIISEGLYAIAVVLSFSRIAYILPANESFGPLQISLGRTVKDIFKFMVIFIMVFVAFMIGMFNLYSYYRGAKYNPAFTTVEESFKTLFWSIFGLSEVISVVLKYDHKFIENIGYVLYGVYNVTMVVVLLNMLIAMINNSYQEIEEDADVEWKFARAKLWLSYFDEGRTLPAPFNLVPSPKSFYYLIMRIKMCLIELCQSKAKRCENDLEMGMLNSKFRKTRYQAGMRNSENLTANSTFSKPTRYQKIMKRLIKRYVLKAQVDRENDEVNEGELKEIKQDISSLRYELLEEKSQATGELADLIQQLSEKFGKNLNKDHLRVNQGKDI.

Positions 1-21 (MLGSNTFKNMQRRHTTLREKG) are disordered. At 1–351 (MLGSNTFKNM…GLRQQSIAVK (351 aa)) the chain is on the cytoplasmic side. The segment covering 10-21 (MQRRHTTLREKG) has biased composition (basic residues). Position 15 is a phosphothreonine; by PKG/PRKG1 (Thr-15). ANK repeat units follow at residues 42-71 (PEEERFLDSAEYGNIPVVRKMLEESKTLNF), 77-106 (MGQNALQLAVGNEHLEVTELLLKKENLARV), 108-134 (DALLLAISKGYVRIVEAILSHPAFAQG), and 163-192 (HDITPIILAAHCQEYEIVHILLLKGARIER). The helical transmembrane segment at 352–372 (FLAVFGVSIGLPFLAIAYWIA) threads the bilayer. The Extracellular segment spans residues 373 to 383 (PCSKLGQTLRS). Residues 384–404 (PFMKFVAHAVSFTIFLGLLVV) traverse the membrane as a helical segment. Topologically, residues 405–465 (NASDRFEGVK…KEIWEEGPRE (61 aa)) are cytoplasmic. The chain crosses the membrane as a helical span at residues 466 to 486 (YVLHLWNLLDFGMLSIFVASF). The Extracellular portion of the chain corresponds to 487–537 (TARFMAFLKASEAQLYVDQYVQDVTLHNVSLPPEVAYFTYARDKWWPSDPQ). The N-linked (GlcNAc...) asparagine glycan is linked to Asn-514. The chain crosses the membrane as a helical span at residues 538 to 558 (IISEGLYAIAVVLSFSRIAYI). The Cytoplasmic portion of the chain corresponds to 559–581 (LPANESFGPLQISLGRTVKDIFK). A helical membrane pass occupies residues 582–602 (FMVIFIMVFVAFMIGMFNLYS). At 603-651 (YYRGAKYNPAFTTVEESFKTLFWSIFGLSEVISVVLKYDHKFIENIGYV) the chain is on the extracellular side. A helical transmembrane segment spans residues 652 to 672 (LYGVYNVTMVVVLLNMLIAMI). Residues 673 to 862 (NNSYQEIEED…HLRVNQGKDI (190 aa)) are Cytoplasmic-facing.

This sequence belongs to the transient receptor (TC 1.A.4) family. STrpC subfamily. TRPC7 sub-subfamily. In terms of assembly, interacts with MX1 and RNF24. Interacts (via ANK-repeat domains) with PRKG1. In terms of processing, phosphorylation by PRKG1 at Thr-15 negatively regulates TRPC7 activity.

Its subcellular location is the cell membrane. The protein localises to the nucleus envelope. The enzyme catalyses Ca(2+)(in) = Ca(2+)(out). Its function is as follows. Forms a receptor-activated non-selective calcium permeant cation channel. Probably is operated by a phosphatidylinositol second messenger system activated by receptor tyrosine kinases or G-protein coupled receptors. Activated by diacylglycerol (DAG). May also be activated by intracellular calcium store depletion. The sequence is that of Short transient receptor potential channel 7 (Trpc7) from Mus musculus (Mouse).